A 347-amino-acid polypeptide reads, in one-letter code: Endo-1,4-beta-xylanase 3 (347 aa).

Residues 1–16 form the signal peptide; it reads MKANVILCLLAPLVAA. Residues 17 to 45 constitute a propeptide that is removed on maturation; sequence LPTETIHLDPELAALRANLTERTADLWDR. Gln46 bears the Pyrrolidone carboxylic acid mark. One can recognise a GH10 domain in the interval 46 to 345; sequence QASQSIDQLI…KPAYNSIVGI (300 aa). Catalysis depends on Glu176, which acts as the Proton donor. Residue Glu282 is the Nucleophile of the active site. Cys300 and Cys306 form a disulfide bridge.

It belongs to the glycosyl hydrolase 10 (cellulase F) family. In terms of assembly, monomer. Post-translationally, not glycosylated.

It localises to the secreted. The enzyme catalyses Endohydrolysis of (1-&gt;4)-beta-D-xylosidic linkages in xylans.. Its pathway is glycan degradation; xylan degradation. Glycoside hydrolase involved in the hydrolysis of xylan, a major plant cell wall hemicellulose made up of 1,4-beta-linked D-xylopyranose residues. Catalyzes the endohydrolysis of the main-chain 1,4-beta-glycosidic bonds connecting the xylose subunits yielding various xylooligosaccharides and xylose. Produces xylobiose and xylotriose as the main degradation products. This chain is Endo-1,4-beta-xylanase 3 (xyn3), found in Hypocrea jecorina (strain QM6a) (Trichoderma reesei).